Reading from the N-terminus, the 467-residue chain is Proton extrusion protein PxcA (467 aa).

A compositionally biased stretch (polar residues) spans 146 to 161; it reads SQVRTTSSQPPENPSL. 2 disordered regions span residues 146 to 167 and 186 to 205; these read SQVR…ALRT and PQLI…KADT. The span at 191–203 shows a compositional bias: basic and acidic residues; that stretch reads QRTEQSKKSRGKA. A run of 4 helical transmembrane segments spans residues 249-269, 352-372, 391-411, and 427-447; these read FILL…ALIV, IFSV…IMVL, IIIL…WEVI, and FIFL…KYWI.

It belongs to the CemA family.

Its subcellular location is the cell inner membrane. Functionally, required for H(+) efflux immediately after light irradiation to form a rapid H(+) concentration gradient across the thylakoid membranes. Together with PxcL, contributes to transient H(+) uptake following dark to light transition. This chain is Proton extrusion protein PxcA, found in Nostoc sp. (strain PCC 7120 / SAG 25.82 / UTEX 2576).